The following is a 119-amino-acid chain: NADH-quinone oxidoreductase subunit A (119 aa).

The next 3 helical transmembrane spans lie at Val9 to Val29, Leu63 to Val83, and Val88 to Ala108.

The protein belongs to the complex I subunit 3 family. In terms of assembly, NDH-1 is composed of 14 different subunits. Subunits NuoA, H, J, K, L, M, N constitute the membrane sector of the complex.

Its subcellular location is the cell inner membrane. It carries out the reaction a quinone + NADH + 5 H(+)(in) = a quinol + NAD(+) + 4 H(+)(out). NDH-1 shuttles electrons from NADH, via FMN and iron-sulfur (Fe-S) centers, to quinones in the respiratory chain. The immediate electron acceptor for the enzyme in this species is believed to be ubiquinone. Couples the redox reaction to proton translocation (for every two electrons transferred, four hydrogen ions are translocated across the cytoplasmic membrane), and thus conserves the redox energy in a proton gradient. The protein is NADH-quinone oxidoreductase subunit A of Paracidovorax citrulli (strain AAC00-1) (Acidovorax citrulli).